We begin with the raw amino-acid sequence, 165 residues long: Nucleotide-binding protein MXAN_1478 (165 aa).

The protein belongs to the YajQ family.

Nucleotide-binding protein. The chain is Nucleotide-binding protein MXAN_1478 from Myxococcus xanthus (strain DK1622).